The primary structure comprises 54 residues: Rubredoxin-1 (54 aa).

In terms of domain architecture, Rubredoxin-like spans M1 to V52. Fe cation contacts are provided by C6, C9, C39, and C42.

This sequence belongs to the rubredoxin family. The cofactor is Fe(3+).

The protein localises to the cytoplasm. It functions in the pathway hydrocarbon metabolism; alkane degradation. Its function is as follows. Involved in the hydrocarbon hydroxylating system, which transfers electrons from NADH to rubredoxin reductase and then through rubredoxin to alkane 1 monooxygenase. This chain is Rubredoxin-1 (rubA), found in Alcanivorax borkumensis (strain ATCC 700651 / DSM 11573 / NCIMB 13689 / SK2).